Here is a 325-residue protein sequence, read N- to C-terminus: Glycerol-3-phosphate dehydrogenase [NAD(P)+] (325 aa).

Residues serine 14, phenylalanine 15, arginine 35, and lysine 109 each contribute to the NADPH site. Residues lysine 109 and glycine 137 each coordinate sn-glycerol 3-phosphate. Residue alanine 141 coordinates NADPH. Residues lysine 192, aspartate 247, serine 257, arginine 258, and asparagine 259 each contribute to the sn-glycerol 3-phosphate site. The active-site Proton acceptor is the lysine 192. An NADPH-binding site is contributed by arginine 258. Residues leucine 282 and glutamate 284 each contribute to the NADPH site.

The protein belongs to the NAD-dependent glycerol-3-phosphate dehydrogenase family.

The protein resides in the cytoplasm. The catalysed reaction is sn-glycerol 3-phosphate + NAD(+) = dihydroxyacetone phosphate + NADH + H(+). The enzyme catalyses sn-glycerol 3-phosphate + NADP(+) = dihydroxyacetone phosphate + NADPH + H(+). The protein operates within membrane lipid metabolism; glycerophospholipid metabolism. Catalyzes the reduction of the glycolytic intermediate dihydroxyacetone phosphate (DHAP) to sn-glycerol 3-phosphate (G3P), the key precursor for phospholipid synthesis. The polypeptide is Glycerol-3-phosphate dehydrogenase [NAD(P)+] (Rickettsia africae (strain ESF-5)).